A 276-amino-acid polypeptide reads, in one-letter code: Type II pantothenate kinase (276 aa).

8–15 (DAGGTLTK) is a binding site for ATP. The active-site Proton acceptor is the glutamate 76. ATP-binding positions include threonine 105, 127–131 (GGTIM), phenylalanine 143, and serine 230.

This sequence belongs to the type II pantothenate kinase family. In terms of assembly, homodimer.

It is found in the cytoplasm. The enzyme catalyses (R)-pantothenate + ATP = (R)-4'-phosphopantothenate + ADP + H(+). Its pathway is cofactor biosynthesis; coenzyme A biosynthesis; CoA from (R)-pantothenate: step 1/5. Catalyzes the phosphorylation of pantothenate (Pan), the first step in CoA biosynthesis. The chain is Type II pantothenate kinase from Bacillus anthracis.